A 125-amino-acid polypeptide reads, in one-letter code: Small ribosomal subunit protein uS13 (125 aa).

The disordered stretch occupies residues 95–125; that stretch reads GLPLRGQRTKTNARTRKGKRKTVANKKIASK.

It belongs to the universal ribosomal protein uS13 family. As to quaternary structure, part of the 30S ribosomal subunit. Forms a loose heterodimer with protein S19. Forms two bridges to the 50S subunit in the 70S ribosome.

Located at the top of the head of the 30S subunit, it contacts several helices of the 16S rRNA. In the 70S ribosome it contacts the 23S rRNA (bridge B1a) and protein L5 of the 50S subunit (bridge B1b), connecting the 2 subunits; these bridges are implicated in subunit movement. Contacts the tRNAs in the A and P-sites. This Borreliella burgdorferi (strain ATCC 35210 / DSM 4680 / CIP 102532 / B31) (Borrelia burgdorferi) protein is Small ribosomal subunit protein uS13.